We begin with the raw amino-acid sequence, 185 residues long: Ribosome-recycling factor (185 aa).

Belongs to the RRF family.

Its subcellular location is the cytoplasm. Functionally, responsible for the release of ribosomes from messenger RNA at the termination of protein biosynthesis. May increase the efficiency of translation by recycling ribosomes from one round of translation to another. The protein is Ribosome-recycling factor of Lactococcus lactis subsp. cremoris (strain SK11).